The following is a 296-amino-acid chain: 4-hydroxy-tetrahydrodipicolinate synthase (296 aa).

Thr49 contacts pyruvate. Tyr137 serves as the catalytic Proton donor/acceptor. The Schiff-base intermediate with substrate role is filled by Lys166. Ile208 serves as a coordination point for pyruvate.

This sequence belongs to the DapA family. In terms of assembly, homotetramer; dimer of dimers.

The protein resides in the cytoplasm. It carries out the reaction L-aspartate 4-semialdehyde + pyruvate = (2S,4S)-4-hydroxy-2,3,4,5-tetrahydrodipicolinate + H2O + H(+). It participates in amino-acid biosynthesis; L-lysine biosynthesis via DAP pathway; (S)-tetrahydrodipicolinate from L-aspartate: step 3/4. Functionally, catalyzes the condensation of (S)-aspartate-beta-semialdehyde [(S)-ASA] and pyruvate to 4-hydroxy-tetrahydrodipicolinate (HTPA). The chain is 4-hydroxy-tetrahydrodipicolinate synthase from Chlorobium limicola (strain DSM 245 / NBRC 103803 / 6330).